Reading from the N-terminus, the 316-residue chain is Ornithine carbamoyltransferase (316 aa).

Residues Ser-59–Thr-62, Gln-86, Arg-110, and His-137–Gln-140 contribute to the carbamoyl phosphate site. L-ornithine-binding positions include Asn-168, Asp-232, and Ser-236 to Met-237. Carbamoyl phosphate is bound by residues Cys-273–Leu-274 and Arg-301.

Belongs to the aspartate/ornithine carbamoyltransferase superfamily. OTCase family.

The protein resides in the cytoplasm. It catalyses the reaction carbamoyl phosphate + L-ornithine = L-citrulline + phosphate + H(+). The protein operates within amino-acid biosynthesis; L-arginine biosynthesis; L-arginine from L-ornithine and carbamoyl phosphate: step 1/3. Functionally, reversibly catalyzes the transfer of the carbamoyl group from carbamoyl phosphate (CP) to the N(epsilon) atom of ornithine (ORN) to produce L-citrulline. The sequence is that of Ornithine carbamoyltransferase (argF) from Listeria monocytogenes serovar 1/2a (strain ATCC BAA-679 / EGD-e).